The sequence spans 592 residues: uncharacterized protein (592 aa).

This is an uncharacterized protein from Acanthamoeba polyphaga mimivirus (APMV).